The chain runs to 731 residues: Catalase-peroxidase (731 aa).

The interval 1-23 (MSDLKCPFSGHTGAVTPAGNTNN) is disordered. Residues 95–218 (WHSAGTYRTG…LAAVEMGLIY (124 aa)) constitute a cross-link (tryptophyl-tyrosyl-methioninium (Trp-Tyr) (with M-244)). Residue histidine 96 is the Proton acceptor of the active site. A cross-link (tryptophyl-tyrosyl-methioninium (Tyr-Met) (with W-95)) is located at residues 218–244 (YVNPEGPHGEPDPVASGRDVRETFARM). Position 259 (histidine 259) interacts with heme b.

Belongs to the peroxidase family. Peroxidase/catalase subfamily. Homodimer or homotetramer. Heme b is required as a cofactor. Formation of the three residue Trp-Tyr-Met cross-link is important for the catalase, but not the peroxidase activity of the enzyme.

The catalysed reaction is H2O2 + AH2 = A + 2 H2O. It catalyses the reaction 2 H2O2 = O2 + 2 H2O. Bifunctional enzyme with both catalase and broad-spectrum peroxidase activity. In Synechococcus sp. (strain WH7803), this protein is Catalase-peroxidase.